We begin with the raw amino-acid sequence, 262 residues long: Ornithine carbamoyltransferase (262 aa).

Carbamoyl phosphate-binding positions include 3–7 (STRTR), Gln30, Arg54, and 81–84 (HPTQ). Residues Asn114, Asp178, and 182-183 (SM) contribute to the L-ornithine site. Carbamoyl phosphate-binding positions include 219 to 222 (HCLP) and Thr247.

It belongs to the aspartate/ornithine carbamoyltransferase superfamily. OTCase family.

The protein localises to the cytoplasm. The catalysed reaction is carbamoyl phosphate + L-ornithine = L-citrulline + phosphate + H(+). The protein operates within amino-acid biosynthesis; L-arginine biosynthesis; L-arginine from L-ornithine and carbamoyl phosphate: step 1/3. This Neisseria cinerea protein is Ornithine carbamoyltransferase (argF).